A 242-amino-acid polypeptide reads, in one-letter code: MNPDEFVTTLNNQSLPISNRKMVLFQTYLEFLLEYSKKVNLTAIKEPKDIWLKHFYDSLTPLLYLPDMNKKASLIDIGSGAGFPGVPLKIVNQKFQLTLLDSLQKRIAFLDQLIDKLNLKNVETVHGRAEDFAHNLNYREKYDFAIARAVSNTNTLLELLLPFVKVGGKIILMKTVHVESEIYGASKALEELGGRVSQSFSFELPNDDPRVLITIDKISSTKKRYPRKAGVPEKSPIGGKHD.

Residues glycine 78, phenylalanine 83, alanine 129–glutamate 130, and arginine 148 each bind S-adenosyl-L-methionine. The segment at threonine 221 to aspartate 242 is disordered.

It belongs to the methyltransferase superfamily. RNA methyltransferase RsmG family.

It is found in the cytoplasm. In terms of biological role, specifically methylates the N7 position of a guanine in 16S rRNA. The sequence is that of Ribosomal RNA small subunit methyltransferase G from Oenococcus oeni (strain ATCC BAA-331 / PSU-1).